Here is a 202-residue protein sequence, read N- to C-terminus: Dephospho-CoA kinase (202 aa).

The DPCK domain occupies 5–202; sequence VIGLTGGIGS…KKYLTLTKMV (198 aa). 13 to 18 contributes to the ATP binding site; that stretch reads GSGKTT.

This sequence belongs to the CoaE family.

The protein localises to the cytoplasm. It catalyses the reaction 3'-dephospho-CoA + ATP = ADP + CoA + H(+). The protein operates within cofactor biosynthesis; coenzyme A biosynthesis; CoA from (R)-pantothenate: step 5/5. In terms of biological role, catalyzes the phosphorylation of the 3'-hydroxyl group of dephosphocoenzyme A to form coenzyme A. The protein is Dephospho-CoA kinase of Colwellia psychrerythraea (strain 34H / ATCC BAA-681) (Vibrio psychroerythus).